Here is a 608-residue protein sequence, read N- to C-terminus: RAS guanyl-releasing protein 2 (608 aa).

Residues 4–126 (TLDLDKGCTV…SLIDIESVPT (123 aa)) form the N-terminal Ras-GEF domain. Phosphoserine is present on residues Ser-116, Ser-117, and Ser-147. The Ras-GEF domain maps to 154 to 387 (EPMELAEHLT…YQLSLQREPR (234 aa)). The tract at residues 382-405 (LQREPRSKSSPTSPTSCTPPPRPP) is disordered. EF-hand domains are found at residues 426–461 (HIEKMVESVFRNFDVDGDGHISQEEFQIIRGNFPYL) and 463–490 (AFGDLDQNQDGCISREEMISYFLRSSSV). Ca(2+) is bound by residues Asp-439, Asp-441, Asp-443, His-445, Glu-450, Asp-468, Asn-470, Asp-472, Cys-474, and Glu-479. The segment at 498 to 548 (VHNLQESNSLRPVACRHCKALILGIYKQGLKCRACGVNCHKQCKDRLSVEC) adopts a Phorbol-ester/DAG-type zinc-finger fold. Phosphoserine occurs at positions 554 and 575. The disordered stretch occupies residues 555–596 (VSLEGSAPSPSPTHTHHRAFSFSLPRPGRRSSRPPEIREEEV).

This sequence belongs to the RASGRP family. As to quaternary structure, forms a signaling complex with RAP1 and BRAF. Interacts with F-actin. Interacts with RAP1. In terms of tissue distribution, expressed in striatal neurons (at protein level). Expressed in the hematopoietic system. Detected in olfactory structures and deep cortical layers of brain.

Its subcellular location is the cytoplasm. It localises to the cytosol. The protein localises to the cell membrane. The protein resides in the synapse. It is found in the synaptosome. Its subcellular location is the cell projection. It localises to the ruffle membrane. In terms of biological role, functions as a calcium- and DAG-regulated nucleotide exchange factor specifically activating Rap through the exchange of bound GDP for GTP. May also activate other GTPases such as RRAS, RRAS2, NRAS, KRAS but not HRAS. Functions in aggregation of platelets and adhesion of T-lymphocytes and neutrophils probably through inside-out integrin activation. May function in the muscarinic acetylcholine receptor M1/CHRM1 signaling pathway. This is RAS guanyl-releasing protein 2 (Rasgrp2) from Rattus norvegicus (Rat).